We begin with the raw amino-acid sequence, 249 residues long: tRNA (guanine-N(1)-)-methyltransferase (249 aa).

S-adenosyl-L-methionine-binding positions include Gly-113 and 132–137 (VGDFVV).

It belongs to the RNA methyltransferase TrmD family. Homodimer.

Its subcellular location is the cytoplasm. It catalyses the reaction guanosine(37) in tRNA + S-adenosyl-L-methionine = N(1)-methylguanosine(37) in tRNA + S-adenosyl-L-homocysteine + H(+). In terms of biological role, specifically methylates guanosine-37 in various tRNAs. The polypeptide is tRNA (guanine-N(1)-)-methyltransferase (Desulforudis audaxviator (strain MP104C)).